Reading from the N-terminus, the 615-residue chain is 1-deoxy-D-xylulose-5-phosphate synthase (615 aa).

Thiamine diphosphate-binding positions include H72 and 111-113; that span reads GHS. Position 142 (D142) interacts with Mg(2+). Thiamine diphosphate is bound by residues 143-144, N171, Y278, and E360; that span reads GA. Residue N171 coordinates Mg(2+).

This sequence belongs to the transketolase family. DXPS subfamily. As to quaternary structure, homodimer. The cofactor is Mg(2+). It depends on thiamine diphosphate as a cofactor.

The catalysed reaction is D-glyceraldehyde 3-phosphate + pyruvate + H(+) = 1-deoxy-D-xylulose 5-phosphate + CO2. Its pathway is metabolic intermediate biosynthesis; 1-deoxy-D-xylulose 5-phosphate biosynthesis; 1-deoxy-D-xylulose 5-phosphate from D-glyceraldehyde 3-phosphate and pyruvate: step 1/1. Functionally, catalyzes the acyloin condensation reaction between C atoms 2 and 3 of pyruvate and glyceraldehyde 3-phosphate to yield 1-deoxy-D-xylulose-5-phosphate (DXP). This is 1-deoxy-D-xylulose-5-phosphate synthase from Campylobacter jejuni (strain RM1221).